A 163-amino-acid chain; its full sequence is MRDGVAIYPGTFDPFTRGHEDLVRRASLLFDQVVVGVAESRGKAPIFTLEERVEIAREVVKPFPNVRVAGFDGLLMDFLRAQNGRVILRGLRAVSDFEYEFQMAGMNRKLFPDVETVFLTPAEEYMFISATMVREIARLGGDVSKFVQPSVLTQLQQKVSSKR.

T11 serves as a coordination point for substrate. ATP is bound by residues 11-12 (TF) and H19. Substrate contacts are provided by K43, L75, and R89. ATP-binding positions include 90 to 92 (GLR), E100, and 125 to 131 (YMFISAT).

It belongs to the bacterial CoaD family. As to quaternary structure, homohexamer. The cofactor is Mg(2+).

It is found in the cytoplasm. It carries out the reaction (R)-4'-phosphopantetheine + ATP + H(+) = 3'-dephospho-CoA + diphosphate. Its pathway is cofactor biosynthesis; coenzyme A biosynthesis; CoA from (R)-pantothenate: step 4/5. Functionally, reversibly transfers an adenylyl group from ATP to 4'-phosphopantetheine, yielding dephospho-CoA (dPCoA) and pyrophosphate. The protein is Phosphopantetheine adenylyltransferase of Azoarcus sp. (strain BH72).